The chain runs to 456 residues: Choline kinase (456 aa).

This sequence belongs to the choline/ethanolamine kinase family. Monomer. Mg(2+) is required as a cofactor.

It localises to the cytoplasm. The protein resides in the nucleus. The enzyme catalyses choline + ATP = phosphocholine + ADP + H(+). Its pathway is phospholipid metabolism; phosphatidylcholine biosynthesis; phosphocholine from choline: step 1/1. Its function is as follows. Catalyzes the committed step in the synthesis of phosphatidylcholine by the CDP-choline pathway. The protein is Choline kinase of Schizosaccharomyces pombe (strain 972 / ATCC 24843) (Fission yeast).